A 218-amino-acid chain; its full sequence is Capsid protein (218 aa).

Residue M1 is modified to N-acetylmethionine; by host. Positions 1–10 (MDKSESTSAG) are enriched in low complexity. The segment at 1-30 (MDKSESTSAGRNRRRRLRRGSRSASSSSDA) is disordered. A compositionally biased stretch (basic residues) spans 11 to 21 (RNRRRRLRRGS).

The protein belongs to the cucumovirus capsid protein family.

The protein localises to the virion. Capsid protein. Probably binds RNA and plays a role in packaging. In Cucumber mosaic virus (strain Y) (CMV), this protein is Capsid protein.